Reading from the N-terminus, the 326-residue chain is Glutaminase 2 (326 aa).

Ser73, Asn125, Glu169, Asn176, Tyr200, Tyr252, and Val270 together coordinate substrate.

This sequence belongs to the glutaminase family. As to quaternary structure, homotetramer.

It catalyses the reaction L-glutamine + H2O = L-glutamate + NH4(+). This chain is Glutaminase 2, found in Bacillus cereus (strain ATCC 14579 / DSM 31 / CCUG 7414 / JCM 2152 / NBRC 15305 / NCIMB 9373 / NCTC 2599 / NRRL B-3711).